The chain runs to 115 residues: Movement protein TGB2 (115 aa).

The Cytoplasmic segment spans residues 1–13; it reads MSAQGHRLTAPVN. The chain crosses the membrane as a helical span at residues 14 to 34; sequence SEKVYIVLGLSFALVSITFLL. Over 35-74 the chain is Lumenal; it reads SRNSLPHVGDNIHSLPHGGAYRDGTKAILYNSPNLGSRVS. A helical transmembrane segment spans residues 75–95; the sequence is LHNGKNAAFAAVLLLTLLIYG. The Cytoplasmic portion of the chain corresponds to 96 to 115; it reads SKYISQRNHTCACGNNHSSH.

This sequence belongs to the Tymovirales TGBp2 protein family.

The protein resides in the host endoplasmic reticulum membrane. Functionally, plays a role in viral cell-to-cell propagation, by facilitating genome transport to neighboring plant cells through plasmosdesmata,. The sequence is that of Movement protein TGB2 from Potato virus X (PVX).